Consider the following 580-residue polypeptide: Alpha-thujene synthase TPS3, chloroplastic (580 aa).

The transit peptide at 1–26 directs the protein to the chloroplast; it reads MALQLLTPSFSFQHSPSPHRLTTLRY. Arg296, Asp333, Asp337, Arg473, and Asp476 together coordinate (2E)-geranyl diphosphate. Residues Asp333 and Asp337 each coordinate Mg(2+). The DDXXD motif motif lies at 333–337; it reads DDVYD. Positions 476, 480, and 484 each coordinate Mg(2+).

This sequence belongs to the terpene synthase family. Tpsb subfamily. As to quaternary structure, monomer. Mg(2+) is required as a cofactor. It depends on Mn(2+) as a cofactor. Mostly expressed in developing and mature fruits, and, to a lower extent, in male leaves. Barely detectable in female leaves and shoots.

It is found in the plastid. Its subcellular location is the chloroplast. The catalysed reaction is (2E)-geranyl diphosphate = alpha-thujene + diphosphate. It catalyses the reaction (2E)-geranyl diphosphate = (1R,5R)-sabinene + diphosphate. It participates in secondary metabolite biosynthesis; terpenoid biosynthesis. Its function is as follows. Monoterpene synthase (TPS) involved in the biosynthesis of monoterpene natural products used by traditional Chinese medicine to treat headache, inflammation and intoxication. Catalyzes the conversion of (2E)-geranyl diphosphate (GPP) into alpha-thujene and (1R,5R)-sabinene. The chain is Alpha-thujene synthase TPS3, chloroplastic from Litsea cubeba (Aromatic litsea).